The chain runs to 424 residues: UDP-glycosyltransferase 76H1 (424 aa).

Residues Ser248, Trp306 to Ala307, His324 to Glu332, and Phe346 to Gln349 each bind UDP-alpha-D-glucose.

This sequence belongs to the UDP-glycosyltransferase family.

Its function is as follows. May glycosylate diterpenes or flavonols in leaves. This chain is UDP-glycosyltransferase 76H1, found in Stevia rebaudiana (Stevia).